The primary structure comprises 2293 residues: Protein Ycf2 A (2293 aa).

1647 to 1654 (GSIGTGRS) is a binding site for ATP.

The protein belongs to the Ycf2 family.

The protein resides in the plastid. The protein localises to the chloroplast stroma. Its function is as follows. Probable ATPase of unknown function. Its presence in a non-photosynthetic plant (Epifagus virginiana) and experiments in tobacco indicate that it has an essential function which is probably not related to photosynthesis. This chain is Protein Ycf2 A, found in Crucihimalaya wallichii (Rock-cress).